The following is a 375-amino-acid chain: Protein HrmA (375 aa).

Its function is as follows. Unknown. May serve a regulatory function. In Pseudomonas syringae pv. syringae, this protein is Protein HrmA (hrmA).